Consider the following 469-residue polypeptide: Cysteine--tRNA ligase (469 aa).

Zn(2+) is bound at residue Cys-28. Positions 30–40 (CTVYDLCHIGH) match the 'HIGH' region motif. Zn(2+)-binding residues include Cys-216, His-241, and Glu-245. The 'KMSKS' region motif lies at 273–277 (KMSKS). Lys-276 provides a ligand contact to ATP.

This sequence belongs to the class-I aminoacyl-tRNA synthetase family. In terms of assembly, monomer. Zn(2+) is required as a cofactor.

The protein localises to the cytoplasm. It catalyses the reaction tRNA(Cys) + L-cysteine + ATP = L-cysteinyl-tRNA(Cys) + AMP + diphosphate. This Colwellia psychrerythraea (strain 34H / ATCC BAA-681) (Vibrio psychroerythus) protein is Cysteine--tRNA ligase.